Reading from the N-terminus, the 337-residue chain is tRNA N6-adenosine threonylcarbamoyltransferase (337 aa).

The Fe cation site is built by H111 and H115. Residues 134 to 138, D167, G180, and N272 each bind substrate; that span reads LVSGG. A Fe cation-binding site is contributed by D300.

The protein belongs to the KAE1 / TsaD family. Requires Fe(2+) as cofactor.

The protein localises to the cytoplasm. It catalyses the reaction L-threonylcarbamoyladenylate + adenosine(37) in tRNA = N(6)-L-threonylcarbamoyladenosine(37) in tRNA + AMP + H(+). In terms of biological role, required for the formation of a threonylcarbamoyl group on adenosine at position 37 (t(6)A37) in tRNAs that read codons beginning with adenine. Is involved in the transfer of the threonylcarbamoyl moiety of threonylcarbamoyl-AMP (TC-AMP) to the N6 group of A37, together with TsaE and TsaB. TsaD likely plays a direct catalytic role in this reaction. The sequence is that of tRNA N6-adenosine threonylcarbamoyltransferase from Aeromonas salmonicida (strain A449).